The following is a 272-amino-acid chain: Transcription factor GAL1 (272 aa).

The span at 1 to 10 (MAGKNMSSRL) shows a compositional bias: polar residues. Disordered regions lie at residues 1 to 49 (MAGK…SPET), 102 to 215 (YGAI…SRDI), and 246 to 272 (KGHLQKDCPDRKQRRGDKRKSGGAMDY). Composition is skewed to acidic residues over residues 113–122 (ESDDDQDEEQ) and 152–174 (SEQDSDASSDSDSDDDEDLDEAE). A compositionally biased stretch (basic and acidic residues) spans 175 to 215 (LLIKAERKEAAAKLRAERKAQRKADEVKSKQMAERRRSRDI). The segment at 240–255 (CHVCGQKGHLQKDCPD) adopts a CCHC-type zinc-finger fold.

The protein localises to the nucleus. Functionally, transcription factor; part of the gene cluster that mediates the biosynthesis of liamocins, glycolipids (also called heavy oils) composed of a single mannitol or arabitol headgroup linked to either three, four or even six 3,5-dihydroxydecanoic ester tail-groups. Positively regulates the expression of PKS1 and EST1 that mediate the biosynthesis of liamocins. The polypeptide is Transcription factor GAL1 (Aureobasidium melanogenum (Aureobasidium pullulans var. melanogenum)).